The primary structure comprises 160 residues: Major strawberry allergen Fra a 1-2 (160 aa).

This sequence belongs to the BetVI family. In terms of assembly, monomer. Interacts with AP. As to expression, highly expressed in ripe red fruits. Expressed in roots and white fruits. Expressed at low levels in open flowers.

Involved in the control of flavonoid biosynthesis in fruits, probably by binding directly to natural flavonoids. Binds the natural flavonoid myricetin with affinities in the low micromolar range. The sequence is that of Major strawberry allergen Fra a 1-2 from Fragaria ananassa (Strawberry).